The sequence spans 511 residues: Cytochrome P450 monooxyhenase eriC (511 aa).

Residues 2–22 (VLADFISIPTVSIACLAVLGI) form a helical membrane-spanning segment. C445 serves as a coordination point for heme.

This sequence belongs to the cytochrome P450 family. Requires heme as cofactor.

The protein localises to the membrane. It carries out the reaction erinacol + reduced [NADPH--hemoprotein reductase] + O2 = cyathadiol + oxidized [NADPH--hemoprotein reductase] + H2O + H(+). It functions in the pathway secondary metabolite biosynthesis. In terms of biological role, cytochrome P450 monooxygenase; part of the gene cluster that mediates the biosynthesis of erinacines, cyathane-xylosides that show unique biological activities, including leishmanicidal activity, stimulating activity for nerve growth-factor synthesis, and agonistic activity toward the kappa opioid receptor. Within the pathway, eriC hydroxylates erinacol at C-15 of the seven-membered ring to yield cyathadiol. The first step of the erinacines biosynthesis pathway is catalyzed by the geranylgeranyl diphosphate (GGPP) synthase eriE via conversion of farnesyl pyrophosphate and isopentyl pyrophosphate into geranylgeranyl pyrophosphate (GGPP). GGPP is then substrate of the diterpene cyclase eriG for the production of cyatha-3,12-diene. The cytochrome P450 monooxygenase eriI then hydroxylates cyatha-3,12-diene at C-14 of the seven-membered ring to produce erinacol, which is further hydroxylated at C-15 by the cytochrome P450 monooxygenase eriC to yield cyathadiol. The cytochrome P450 monooxygenase eriA then catalyzes C-11 hydroxylation in the presence of the short chain dehydrogenase/reductase (SDR) eriH, which leads to the production of cyathatriol. The acetyltransferase eriL converts cyathatriol into 11-O-acetyl-cyathatriol. The SDR eriH catalyzes further oxidation of 11-O-acetyl-cyathatriol into 1-O-acetylcyathin A3. Finally, the glycosyl transferase eriJ tranfers xylose from UDP-xylose onto C-14 of 11-O-acetyl-cyathatriol to form eracine Q. EriJ is also able to convert 11-O-acetyl-cyathatriol to eracine Q2 by using UDP-D-glucose as cosubstrate, but at a lower rate. The sequence is that of Cytochrome P450 monooxyhenase eriC from Hericium erinaceus (Lion's mane mushroom).